Here is a 336-residue protein sequence, read N- to C-terminus: Potassium channel subfamily K member 1 (336 aa).

The Cytoplasmic portion of the chain corresponds to 1–20 (MLQSLAGSSCVRLVERHRSA). The chain crosses the membrane as a helical span at residues 21–41 (WCFGFLVLGYLLYLVFGAVVF). The Extracellular portion of the chain corresponds to 42 to 103 (SSVELPYEDL…SNASGNWNWD (62 aa)). N95 carries N-linked (GlcNAc...) asparagine glycosylation. Positions 104–116 (FTSALFFASTVLS) form an intramembrane region, helical. An intramembrane segment occupies 117 to 122 (TTGYGH). Positions 117–122 (TTGYGH) are selectivity filter 1. Residues 123-132 (TVPLSDGGKA) are Extracellular-facing. Residues 133–156 (FCIIYSVIGIPFTLLFLTAVVQRV) form a helical membrane-spanning segment. Residues 157-181 (TVHVTRRPVLYFHIRWGFSKQVVAI) lie on the Cytoplasmic side of the membrane. A helical transmembrane segment spans residues 182-202 (VHAVLLGFVTVSCFFFIPAAV). The Extracellular portion of the chain corresponds to 203–211 (FSVLEDDWN). Residues 212–224 (FLESFYFCFISLS) constitute an intramembrane region (helical). Positions 225 to 230 (TIGLGD) are selectivity filter 2. An intramembrane segment occupies 225–231 (TIGLGDY). Residues 232–243 (VPGEGYNQKFRE) lie on the Extracellular side of the membrane. A helical membrane pass occupies residues 244–267 (LYKIGITCYLLLGLIAMLVVLETF). Topologically, residues 268–336 (CELHELKKFR…PPYEDGSANH (69 aa)) are cytoplasmic. A Glycyl lysine isopeptide (Lys-Gly) (interchain with G-Cter in SUMO) cross-link involves residue K274. The segment at 293–299 (IMEHDQL) is important for intracellular retention in recycling endosomes. Residues 310–336 (GLKEEQKQNEPFVASQSPPYEDGSANH) are disordered. S326 bears the Phosphoserine mark.

This sequence belongs to the two pore domain potassium channel (TC 1.A.1.8) family. As to quaternary structure, homodimer; disulfide-linked. Heterodimer with KCNK2; disulfide-linked. In astrocytes, forms mostly heterodimeric potassium channels with KCNK2, with only a minor proportion of functional channels containing homodimeric KCNK1. Interacts with KCNK3 and KCNK9, forming functional heterodimeric channels. Interacts with GNG4. Identified in a complex with PSD and ARF6; interacts only with PSD that is bound to ARF6. Interacts with UBE2I. Post-translationally, sumoylation is controversial. Sumoylated by UBE2I. Not sumoylated when expressed in xenopus oocytes or mammalian cells. Sumoylation inactivates the channel, but does not interfere with expression at the cell membrane. Sumoylation of a single subunit is sufficient to silence the dimeric channel. Sumoylation of KCNK1 is sufficient to silence heterodimeric channels formed by KCNK1 and KCNK3 or KCNK9. Desumoylated by SENP1; this activates the channel. Desumoylated by SENP1; this strongly increases halothane-mediated activation of heterodimeric channels formed with KCNK9. SENP1 treatment has no effect. Detected in brain and in kidney cortex and medulla, especially at the renal brush border membranes of the proximal convoluted tubules, in distal tubules and on intercalated cells of the collecting duct. Detected in cerebellum granule neurons. Detected in astrocytes in hippocampus stratum radiatum. Highly expressed in the stria vascularis in the cochlea. Detected in neurons in Scarpa's ganglion in the inner ear, at nerve terminals in the crista ampullaris, in supporting cells and dark cells, but not in hair cells (at protein level). Detected in the brain cerebellar granule cell layer, amygdala, thalamus reticular nucleus, habenula, mesencephalic trigeminal neurons, neocortex and piriform cortex, and at lower levels in the olfactory bulb. Detected in Scarpa's ganglia and crista ampullaris in the inner ear.

The protein resides in the cell membrane. It is found in the recycling endosome. The protein localises to the apical cell membrane. Its subcellular location is the cytoplasmic vesicle. It localises to the perikaryon. The protein resides in the cell projection. It is found in the dendrite. The protein localises to the synaptic cell membrane. It catalyses the reaction K(+)(in) = K(+)(out). It carries out the reaction NH4(+)(in) = NH4(+)(out). The catalysed reaction is Na(+)(in) = Na(+)(out). The enzyme catalyses Rb(+)(in) = Rb(+)(out). It catalyses the reaction Cs(+)(in) = Cs(+)(out). It carries out the reaction Li(+)(in) = Li(+)(out). The catalysed reaction is L-glutamate(out) = L-glutamate(in). The enzyme catalyses chloride(in) = chloride(out). Inhibited by 100 uM quinine. Slightly inhibited by Ba(+). Activity is first increased and then decreased when the extracellular pH is lowered to 6.0. Its function is as follows. Ion channel that contributes to passive transmembrane potassium transport and to the regulation of the resting membrane potential in brain astrocytes, but also in kidney and in other tissues. Forms dimeric channels through which potassium ions pass in accordance with their electrochemical gradient. The channel is selective for K(+) ions at physiological potassium concentrations and at neutral pH, but becomes permeable to Na(+) at subphysiological K(+) levels and upon acidification of the extracellular medium. The homodimer has very low potassium channel activity, when expressed in heterologous systems, and can function as weakly inward rectifying potassium channel. Channel activity is modulated by activation of serotonin receptors. Heterodimeric channels containing KCNK1 and KCNK2 have much higher activity, and may represent the predominant form in astrocytes. Heterodimeric channels containing KCNK1 and KCNK3 or KCNK9 have much higher activity. Heterodimeric channels formed by KCNK1 and KCNK9 may contribute to halothane-sensitive currents. Mediates outward rectifying potassium currents in dentate gyrus granule cells and contributes to the regulation of their resting membrane potential. Contributes to the regulation of action potential firing in dentate gyrus granule cells and down-regulates their intrinsic excitability. Contributes to the regulation of the resting membrane potential of pancreatic beta cells. In astrocytes, the heterodimer formed by KCNK1 and KCNK2 is required for rapid glutamate release in response to activation of G-protein coupled receptors, such as F2R and CNR1. Required for normal ion and water transport in the kidney. The low channel activity of homodimeric KCNK1 may be due to sumoylation. The low channel activity may be due to rapid internalization from the cell membrane and retention in recycling endosomes. Permeable to monovalent cations with ion selectivity for K(+) &gt; Rb(+) &gt;&gt; NH4(+) &gt;&gt; Cs(+) = Na(+) = Li(+). The protein is Potassium channel subfamily K member 1 of Rattus norvegicus (Rat).